A 472-amino-acid chain; its full sequence is Protein c-ets-2-A (472 aa).

The region spanning 85–170 (NTFNGFAKKR…EHLEEMMKEH (86 aa)) is the PNT domain. A DNA-binding region (ETS) is located at residues 366 to 446 (IQLWQFLLEL…SGKRYVYRFV (81 aa)).

This sequence belongs to the ETS family.

The protein localises to the nucleus. Functionally, probable transcription factor. The polypeptide is Protein c-ets-2-A (ets2-a) (Xenopus laevis (African clawed frog)).